A 479-amino-acid chain; its full sequence is Auxin transporter-like protein 1 (479 aa).

The Cytoplasmic segment spans residues 1-58 (MLSEKQGEETMMSSLNETIELNEEREEEKGASPGSGFKNFLWHGGSVYDAWFSCASNQ). The helical transmembrane segment at 59 to 76 (VAQVLLTLPYSFSQLGMI) threads the bilayer. The Extracellular portion of the chain corresponds to 77–78 (SG). Residues 79 to 99 (IIFQVFYGLMGSWTAYLISIL) traverse the membrane as a helical segment. Residues 100 to 134 (YVEYRSRKEKENVSFKNHVIQWFEVLEGLLGPYWK) lie on the Cytoplasmic side of the membrane. A helical transmembrane segment spans residues 135 to 155 (AIGLAFNCTFLLFGSVIQLIA). The Extracellular segment spans residues 156–171 (CASNIYYINDHLDKRT). The chain crosses the membrane as a helical span at residues 172 to 192 (WTYIFGACCATTVFIPSFHNY). Over 193–195 (RIW) the chain is Cytoplasmic. A helical transmembrane segment spans residues 196-216 (SFLGLGMTTYTAWYMTIAAIV). The Extracellular segment spans residues 217–231 (HGQVENVVHSGPKKM). The chain crosses the membrane as a helical span at residues 232–252 (VWYFTGATNILYTFGGHAVTV). Residues 253–265 (EIMHAMWKPQKFK) lie on the Cytoplasmic side of the membrane. The helical transmembrane segment at 266–286 (AIYFFATLYVFTLTLPSAIAV) threads the bilayer. At 287 to 313 (YWAFGDQLLDHSNAFSLLPRNAWRDAG) the chain is on the extracellular side. A helical transmembrane segment spans residues 314-334 (VILMLIHQFITFGFACTPLYF). Over 335-355 (VWEKVIGMHDTKSIFLRALAR) the chain is Cytoplasmic. Residues 356-376 (LPVVIPIWFLAIIFPFFGPIN) traverse the membrane as a helical segment. Ser377 is a topological domain (extracellular). A helical transmembrane segment spans residues 378–398 (AVGALLVSFTVYVIPASAHML). Residues 399-421 (TYRSASARQNAAEKLPKVIPSWT) lie on the Cytoplasmic side of the membrane. The chain crosses the membrane as a helical span at residues 422 to 442 (LMYVINAFVVIWVTIVGFGFG). The Extracellular portion of the chain corresponds to 443–479 (GWASMTNFIKQVDTFGLFAKCYQCPPKLPASNHTMHH). Residue Asn474 is glycosylated (N-linked (GlcNAc...) asparagine).

The protein belongs to the amino acid/polyamine transporter 2 family. Amino acid/auxin permease (AAAP) (TC 2.A.18.1) subfamily. Shoots and roots of nodulating plants. Higher levels in roots, flowers and stems, lower in nodules, leaves, petioles and shoot apices.

Its subcellular location is the cell membrane. Carrier protein involved in proton-driven auxin influx. Mediates the formation of auxin gradient from developing leaves (site of auxin biosynthesis) to tips by contributing to the loading of auxin in vascular tissues and facilitating acropetal (base to tip) auxin transport within inner tissues of the root apex, and basipetal (tip to base) auxin transport within outer tissues of the root apex. May be involved in lateral roots and nodules formation. The chain is Auxin transporter-like protein 1 (LAX1) from Medicago truncatula (Barrel medic).